The chain runs to 162 residues: Cyclic pyranopterin monophosphate synthase (162 aa).

Substrate is bound by residues 75–77 (LCH) and 113–114 (ME). Residue Asp128 is part of the active site.

The protein belongs to the MoaC family. As to quaternary structure, homohexamer; trimer of dimers.

It catalyses the reaction (8S)-3',8-cyclo-7,8-dihydroguanosine 5'-triphosphate = cyclic pyranopterin phosphate + diphosphate. It functions in the pathway cofactor biosynthesis; molybdopterin biosynthesis. Its function is as follows. Catalyzes the conversion of (8S)-3',8-cyclo-7,8-dihydroguanosine 5'-triphosphate to cyclic pyranopterin monophosphate (cPMP). In Burkholderia cenocepacia (strain HI2424), this protein is Cyclic pyranopterin monophosphate synthase.